A 1004-amino-acid polypeptide reads, in one-letter code: MAKQEQAPDRANDVFALTSFLYGGNADYIEELYAKYEDDPNSVDPQWRDFFAKLGDNADDVKKNAEGPSWTRKNWPIAANGELVSALDGNWAEVEKHVTDKLKGKAAKGEAKGAAGTPLTAEEITQAARDSVRAIMMIRAYRMRGHLHANLDPLGLAEKPNDYNELEPENYGFTPADYNRKIFIDNVLGLEYATVPEMLDILKRTYCGAIGVEFMHISDPAEKAWIQERIEGPDKKVAFTPEGKKAILSKLIEAEGFEQFIDVKYKGTKRFGLDGGESLIPALEQIVKRGGQMGLKEVVLGMAHRGRLNVLSQVMGKPHRAIFHEFKGGSYTPDDVEGSGDVKYHLGASSDREFDGNKVHLSLTANPSHLEIVNPVVMGKARAKQDLLVGRTRDDMVPLSERPKVLPLLLHGDAAFAGQGVVAECLGLSGLKGHRVAGTLHFIINNQIGFTTNPAFSRSSPYPSDVAKMIEAPIFHVNGDDPEAVVFAAKVATEFRMTFHKPVVIDMFCYRRFGHNEGDEPSFTQPLMYKAIRAHKTTVQLYGEKLIAEGLVTQDDIDRMKADWRQKLEGEFEAGQSYKPNKADWLDGAWAGLRTADNADEQRRGKTAVPVKTLKEIGKKLVEVPKDFHVHRTIQRFLDNRAKMMETGEGIDWATAESLAFGSLAVEGHPIRLSGQDVERGTFSQRHTVLYDQENQNRYIPLNNLQKGQAIYEAINSMLSEEAVLGYEYGYSLSDPRALVLWEAQFGDFANGAQVVFDQFISSGERKWLRMSGLVCLLPHGFEGQGPEHSSARLERYLQLCAEDNMQVANVTTPANYFHILRRQMKRDFRKPLIMMTPKSLLRHKRAISTLAELSGESSFHRLLWDDAQYNKDEGIKLQKDAKIRRVVLCSGKVYYDLYEEREKRGIDDVYLLRVEQLYPFPAKALINELSRFRHAEMVWCQEEPKNMGAWSFIDPYLEWVLAHIDAKHQRVRYAGRPAAASPATGLMSKHLAQLAAFLEDALG.

Belongs to the alpha-ketoglutarate dehydrogenase family. As to quaternary structure, homodimer. Part of the 2-oxoglutarate dehydrogenase (OGDH) complex composed of E1 (2-oxoglutarate dehydrogenase), E2 (dihydrolipoamide succinyltransferase) and E3 (dihydrolipoamide dehydrogenase); the complex contains multiple copies of the three enzymatic components (E1, E2 and E3). Requires thiamine diphosphate as cofactor.

The catalysed reaction is N(6)-[(R)-lipoyl]-L-lysyl-[protein] + 2-oxoglutarate + H(+) = N(6)-[(R)-S(8)-succinyldihydrolipoyl]-L-lysyl-[protein] + CO2. Its function is as follows. E1 component of the 2-oxoglutarate dehydrogenase (OGDH) complex which catalyzes the decarboxylation of 2-oxoglutarate, the first step in the conversion of 2-oxoglutarate to succinyl-CoA and CO(2). This Brucella suis (strain ATCC 23445 / NCTC 10510) protein is 2-oxoglutarate dehydrogenase E1 component.